A 68-amino-acid polypeptide reads, in one-letter code: uncharacterized protein (68 aa).

The segment at 1 to 27 (MNEFEKWIEGRYEPHEQKQKEHEDTMG) is disordered.

This is an uncharacterized protein from Bacillus subtilis (strain 168).